The sequence spans 166 residues: Cytochrome c-type biogenesis protein CcmE (166 aa).

The Cytoplasmic portion of the chain corresponds to 1–8 (MNAVRRKK). Residues 9-29 (LMWVMFTLAGAVIAVALVIYA) traverse the membrane as a helical; Signal-anchor for type II membrane protein segment. Residues 30–166 (IGKQTDYYFD…KLHETKTLQQ (137 aa)) are Periplasmic-facing. Heme contacts are provided by H124 and Y128. The disordered stretch occupies residues 133–166 (VAKSMKENNRSGAVPSSEQYNPAEKLHETKTLQQ). The span at 142–152 (RSGAVPSSEQY) shows a compositional bias: polar residues. The span at 156-166 (EKLHETKTLQQ) shows a compositional bias: basic and acidic residues.

Belongs to the CcmE/CycJ family.

Its subcellular location is the cell inner membrane. In terms of biological role, heme chaperone required for the biogenesis of c-type cytochromes. Transiently binds heme delivered by CcmC and transfers the heme to apo-cytochromes in a process facilitated by CcmF and CcmH. The chain is Cytochrome c-type biogenesis protein CcmE from Psychrobacter arcticus (strain DSM 17307 / VKM B-2377 / 273-4).